A 395-amino-acid chain; its full sequence is MDPDAFTASLFKWDPRTVLSTAPSPRPQLLDYAVTPTTAPMTYHPARLPRELGGLEELFQAYGIRYYTAAKIAELGFTVSTLVDMKDDELDDMMNSLSQIFRWDLLVGERYGIKAAIRAERRRLDEEEIKRRGLLSGDTTNALDALSQEGLSEEPVVQREKEAMGSGGGSTWEVAVVEERRKRQQIRRRRMKMKGNDHGENEEGEEEEEDNISGGGVGGGERQREHPFIVTEPAEVARGKKNGLDYLFHLYEQCREFLIQVQAIAKERGEKCPTKVTNQVFRYAKKAGASYINKPKMRHYVHCYALHCLDEEVSNELRRGFKERGENVGAWRQACYKPLVAIAARQGWDIDAIFNAHPRLSIWYGPTKLRQLCHAERNGAAASSSVSFGTTHLPF.

Disordered stretches follow at residues 147–170 (SQEGLSEEPVVQREKEAMGSGGGS) and 185–223 (QIRRRRMKMKGNDHGENEEGEEEEEDNISGGGVGGGERQ). The span at 202–211 (EEGEEEEEDN) shows a compositional bias: acidic residues. DNA-binding regions lie at residues 224 to 228 (REHPF), 293 to 300 (NKPKMRHY), and 364 to 367 (YGPT).

The protein belongs to the FLO/LFY family. As to expression, highly expressed in leaf, leaflet, inflorescence and lateral shoot primordia on the main shoot axis, and in floral organ and carpel primordia.

Its subcellular location is the nucleus. In terms of biological role, may regulate indeterminacy during leaf and flower development. The polypeptide is Protein UNIFOLIATA (UNI) (Pisum sativum (Garden pea)).